Reading from the N-terminus, the 157-residue chain is Protein Smg homolog (157 aa).

Belongs to the Smg family.

This chain is Protein Smg homolog, found in Shewanella loihica (strain ATCC BAA-1088 / PV-4).